A 91-amino-acid polypeptide reads, in one-letter code: ATP synthase epsilon chain (91 aa).

Belongs to the ATPase epsilon chain family. F-type ATPases have 2 components, CF(1) - the catalytic core - and CF(0) - the membrane proton channel. CF(1) has five subunits: alpha(3), beta(3), gamma(1), delta(1), epsilon(1). CF(0) has three main subunits: a, b and c.

Its subcellular location is the cell membrane. Functionally, produces ATP from ADP in the presence of a proton gradient across the membrane. In Micrococcus luteus (strain ATCC 4698 / DSM 20030 / JCM 1464 / CCM 169 / CCUG 5858 / IAM 1056 / NBRC 3333 / NCIMB 9278 / NCTC 2665 / VKM Ac-2230) (Micrococcus lysodeikticus), this protein is ATP synthase epsilon chain (atpC).